The primary structure comprises 799 residues: Leucine--tRNA ligase (799 aa).

The 'HIGH' region signature appears at 39-50 (PYPSGAGLHMGH). A 'KMSKS' region motif is present at residues 575-579 (KMSKS). ATP is bound at residue K578.

It belongs to the class-I aminoacyl-tRNA synthetase family.

The protein resides in the cytoplasm. It catalyses the reaction tRNA(Leu) + L-leucine + ATP = L-leucyl-tRNA(Leu) + AMP + diphosphate. In Malacoplasma penetrans (strain HF-2) (Mycoplasma penetrans), this protein is Leucine--tRNA ligase.